The primary structure comprises 541 residues: Glucose-6-phosphate isomerase (541 aa).

Glu346 acts as the Proton donor in catalysis. Active-site residues include His377 and Lys506.

This sequence belongs to the GPI family.

Its subcellular location is the cytoplasm. It carries out the reaction alpha-D-glucose 6-phosphate = beta-D-fructose 6-phosphate. It participates in carbohydrate biosynthesis; gluconeogenesis. It functions in the pathway carbohydrate degradation; glycolysis; D-glyceraldehyde 3-phosphate and glycerone phosphate from D-glucose: step 2/4. Functionally, catalyzes the reversible isomerization of glucose-6-phosphate to fructose-6-phosphate. The sequence is that of Glucose-6-phosphate isomerase from Rhizobium meliloti (strain 1021) (Ensifer meliloti).